Here is an 81-residue protein sequence, read N- to C-terminus: Extracellular matrix regulatory protein B (81 aa).

Regulates the biosynthesis of the extracellular matrix and the biofilm formation. May act as an enhancer of biofilm gene expression. Acts in parallel to the pathway that governs SinR derepression. The protein is Extracellular matrix regulatory protein B of Bacillus subtilis (strain 168).